The chain runs to 381 residues: DNA primase DnaG (381 aa).

The Toprim domain occupies 173-259 (DAILVVEGRS…EVEDLEKDEI (87 aa)). Residues Glu-179, Asp-221, and Asp-223 each contribute to the Mg(2+) site.

This sequence belongs to the archaeal DnaG primase family. In terms of assembly, forms a ternary complex with MCM helicase and DNA. Component of the archaeal exosome complex. The cofactor is Mg(2+).

It catalyses the reaction ssDNA + n NTP = ssDNA/pppN(pN)n-1 hybrid + (n-1) diphosphate.. In terms of biological role, RNA polymerase that catalyzes the synthesis of short RNA molecules used as primers for DNA polymerase during DNA replication. Also part of the exosome, which is a complex involved in RNA degradation. Acts as a poly(A)-binding protein that enhances the interaction between heteromeric, adenine-rich transcripts and the exosome. The polypeptide is DNA primase DnaG (Methanothermobacter thermautotrophicus (strain ATCC 29096 / DSM 1053 / JCM 10044 / NBRC 100330 / Delta H) (Methanobacterium thermoautotrophicum)).